Reading from the N-terminus, the 333-residue chain is 4-hydroxythreonine-4-phosphate dehydrogenase (333 aa).

Substrate-binding residues include H136 and T137. Residues H166, H211, and H266 each coordinate a divalent metal cation. K274, N283, and R292 together coordinate substrate.

The protein belongs to the PdxA family. Homodimer. Zn(2+) is required as a cofactor. Mg(2+) serves as cofactor. The cofactor is Co(2+).

The protein localises to the cytoplasm. It catalyses the reaction 4-(phosphooxy)-L-threonine + NAD(+) = 3-amino-2-oxopropyl phosphate + CO2 + NADH. It functions in the pathway cofactor biosynthesis; pyridoxine 5'-phosphate biosynthesis; pyridoxine 5'-phosphate from D-erythrose 4-phosphate: step 4/5. Functionally, catalyzes the NAD(P)-dependent oxidation of 4-(phosphooxy)-L-threonine (HTP) into 2-amino-3-oxo-4-(phosphooxy)butyric acid which spontaneously decarboxylates to form 3-amino-2-oxopropyl phosphate (AHAP). This Acidithiobacillus ferrooxidans (strain ATCC 23270 / DSM 14882 / CIP 104768 / NCIMB 8455) (Ferrobacillus ferrooxidans (strain ATCC 23270)) protein is 4-hydroxythreonine-4-phosphate dehydrogenase.